Reading from the N-terminus, the 431-residue chain is Enolase (431 aa).

Q163 serves as a coordination point for (2R)-2-phosphoglycerate. E205 acts as the Proton donor in catalysis. Mg(2+) is bound by residues D242, E283, and D310. 4 residues coordinate (2R)-2-phosphoglycerate: K335, R364, S365, and K386. The Proton acceptor role is filled by K335.

This sequence belongs to the enolase family. The cofactor is Mg(2+).

It is found in the cytoplasm. It localises to the secreted. The protein localises to the cell surface. The enzyme catalyses (2R)-2-phosphoglycerate = phosphoenolpyruvate + H2O. The protein operates within carbohydrate degradation; glycolysis; pyruvate from D-glyceraldehyde 3-phosphate: step 4/5. In terms of biological role, catalyzes the reversible conversion of 2-phosphoglycerate (2-PG) into phosphoenolpyruvate (PEP). It is essential for the degradation of carbohydrates via glycolysis. This is Enolase from Kineococcus radiotolerans (strain ATCC BAA-149 / DSM 14245 / SRS30216).